A 152-amino-acid polypeptide reads, in one-letter code: Proline-rich acidic protein 1 (152 aa).

Positions 1 to 20 (MKRFLLATCLVAVLLWEAGA) are cleaved as a signal peptide.

As to quaternary structure, interacts with MTTP. Interacts with MAD1L1. As to expression, highly expressed in the small intestine where it shows a proximal-distal graded expression.

It is found in the secreted. It localises to the endoplasmic reticulum. Its function is as follows. Lipid-binding protein which promotes lipid absorption by facilitating MTTP-mediated lipid transfer (mainly triglycerides and phospholipids) and MTTP-mediated apoB lipoprotein assembly and secretion. Protects the gastrointestinal epithelium from irradiation-induced apoptosis. May play an important role in maintaining normal growth homeostasis in epithelial cells. Involved in p53/TP53-dependent cell survival after DNA damage. In Rattus norvegicus (Rat), this protein is Proline-rich acidic protein 1 (Prap1).